The sequence spans 542 residues: Peptide chain release factor 3 (542 aa).

The 270-residue stretch at 14–283 (DKRRNFAIIS…AFLEYALKPG (270 aa)) folds into the tr-type G domain. GTP is bound by residues 23–30 (SHPDAGKT), 91–95 (DTPGH), and 145–148 (NKMD).

The protein belongs to the TRAFAC class translation factor GTPase superfamily. Classic translation factor GTPase family. PrfC subfamily.

The protein localises to the cytoplasm. Its function is as follows. Increases the formation of ribosomal termination complexes and stimulates activities of RF-1 and RF-2. It binds guanine nucleotides and has strong preference for UGA stop codons. It may interact directly with the ribosome. The stimulation of RF-1 and RF-2 is significantly reduced by GTP and GDP, but not by GMP. This is Peptide chain release factor 3 from Trichodesmium erythraeum (strain IMS101).